A 130-amino-acid chain; its full sequence is MSGNRGGSYISGIVPSFKERRPFHERQKDVEEIRSQQPNKVPVIIERFDGERSLPLMDRCKFLVPEHITVAELMSIVRRRLQLHPQQAFFLLVNERSMVSNSMSMSNLYSQERDPDGFVYMVYTSQPAFG.

Gly-130 carries Phosphatidylethanolamine amidated glycine lipidation.

This sequence belongs to the ATG8 family. May interact with vps-39. Interacts with lgg-3; the interaction is direct. Interacts with atg-16.1 (via WD domain) and atg-16.2 (via WD 5-6 repeats); the interactions are direct. Interacts with sepa-1 (via the LIR motifs); the interaction is direct. Interacts with sqst-1 (via the LIR motifs); the interaction is direct. Interacts with epg-2 (via the LIR motifs); the interaction is weak. Interacts with atg-7; the interaction is direct. Interacts with atg-3. The interaction with atg-7 and atg-3 may be required for the lipidation of lgg-2. Post-translationally, this protein is subject to lipidation. Lipidation is regulated by lgg-1.

The protein localises to the cytoplasmic vesicle. The protein resides in the autophagosome. Its subcellular location is the cytoplasm. It localises to the cell membrane. Ubiquitin-like modifier involved in the formation of autophagosomal vacuoles (autophagosomes). When lipidated mediates tethering between adjacent membranes and stimulates membrane fusion. Less effective at promoting membrane fusion than lgg-1. Acts upstream of the autophagy protein epg-5 in the aggrephagy pathway, which is the macroautophagic degradation of ubiquitinated protein aggregates, and preferentially interacts with autophagy proteins and substrates containing LIR motifs to mediate autophagosome formation and protein aggregate degradation. In particular binds to components of an atg-5-lgg-3-atg-16 complex to regulate autophagosome formation and cargo sequestration. Required for the degradation of specific sqst-1-containing aggregates during embryogenesis and the early stages of larval development. Involved in allophagy, which is an autophagic process in which paternal mitochondria and organelles are degraded during fertilization, and moreover is required for the degradation of lgg-1-positive allophagic autophagosomes in embryos. Involved in xenophagy, the autophagy-mediated degradation of pathogens and pathogen products, such as toxins. Also plays a role in membrane-pore repair. Through HOPS complex subunit vps-39, tethers lysosomes with autophagosomes to form autolysosomes. Plays a role in the distribution and clearance of germ cell specific P-granules from somatic cells to ensure exclusive localization of the P-granules in germ cells. Essential for dauer development and life-span extension. This is Protein lgg-2 from Caenorhabditis elegans.